The sequence spans 243 residues: NAD-dependent protein deacylase SIR2rp3 (243 aa).

One can recognise a Deacetylase sirtuin-type domain in the interval 1 to 239; that stretch reads MKACRCITIL…PTWVDQVLKE (239 aa). Position 12 to 31 (12 to 31) interacts with NAD(+); that stretch reads GAGISAESGISTFRDSNGLW. Substrate-binding residues include Tyr-56 and Arg-59. 95–98 contacts NAD(+); sequence QNVD. His-113 functions as the Proton acceptor in the catalytic mechanism. Positions 121 and 141 each coordinate Zn(2+). Residues 181–183 and Ala-225 each bind NAD(+); that span reads GTS.

Belongs to the sirtuin family. Class III subfamily. Zn(2+) is required as a cofactor.

It is found in the mitochondrion. The enzyme catalyses N(6)-malonyl-L-lysyl-[protein] + NAD(+) + H2O = 2''-O-malonyl-ADP-D-ribose + nicotinamide + L-lysyl-[protein]. The catalysed reaction is N(6)-succinyl-L-lysyl-[protein] + NAD(+) + H2O = 2''-O-succinyl-ADP-D-ribose + nicotinamide + L-lysyl-[protein]. It carries out the reaction N(6)-glutaryl-L-lysyl-[protein] + NAD(+) + H2O = 2''-O-glutaryl-ADP-D-ribose + nicotinamide + L-lysyl-[protein]. Its function is as follows. NAD-dependent lysine demalonylase, desuccinylase and deglutarylase that specifically removes malonyl, succinyl and glutaryl groups on target proteins. Has weak NAD-dependent protein deacetylase activity; however this activity may not be physiologically relevant in vivo. The chain is NAD-dependent protein deacylase SIR2rp3 (SIR2rp3) from Leishmania major.